The chain runs to 151 residues: Macrodomain Ter protein (151 aa).

This sequence belongs to the MatP family. Homodimer.

It localises to the cytoplasm. Required for spatial organization of the terminus region of the chromosome (Ter macrodomain) during the cell cycle. Prevents early segregation of duplicated Ter macrodomains during cell division. Binds specifically to matS, which is a 13 bp signature motif repeated within the Ter macrodomain. The chain is Macrodomain Ter protein from Vibrio atlanticus (strain LGP32) (Vibrio splendidus (strain Mel32)).